Reading from the N-terminus, the 554-residue chain is 3-(3-hydroxy-phenyl)propionate/3-hydroxycinnamic acid hydroxylase (554 aa).

FAD-binding positions include 17–46 (QVAIAGAGPVGLMMANYLGQMGIDVLVVEK) and 285–295 (FRIDRVLLAGD).

It belongs to the PheA/TfdB FAD monooxygenase family. FAD is required as a cofactor.

It carries out the reaction 3-(3-hydroxyphenyl)propanoate + NADH + O2 + H(+) = 3-(2,3-dihydroxyphenyl)propanoate + NAD(+) + H2O. The enzyme catalyses (2E)-3-(3-hydroxyphenyl)prop-2-enoate + NADH + O2 + H(+) = (2E)-3-(2,3-dihydroxyphenyl)prop-2-enoate + NAD(+) + H2O. It functions in the pathway aromatic compound metabolism; 3-phenylpropanoate degradation. Functionally, catalyzes the insertion of one atom of molecular oxygen into position 2 of the phenyl ring of 3-(3-hydroxyphenyl)propionate (3-HPP) and hydroxycinnamic acid (3HCI). This is 3-(3-hydroxy-phenyl)propionate/3-hydroxycinnamic acid hydroxylase from Escherichia coli O8 (strain IAI1).